A 70-amino-acid polypeptide reads, in one-letter code: Brevinin-1PLc (70 aa).

A signal peptide spans 1–22 (MFTLKKSMLLLFFLGTINLSLC). Positions 23 to 44 (EEERNAEEERRDEPDEMDVEVE) are excised as a propeptide. Cysteine 64 and cysteine 70 form a disulfide bridge.

Expressed by the skin glands.

Its subcellular location is the secreted. Its function is as follows. Antimicrobial activity against the Gram-negative bacterium E.coli, the Gram-positive bacterium S.aureus and the yeast C.albicans. This Lithobates palustris (Pickerel frog) protein is Brevinin-1PLc.